The sequence spans 264 residues: Claudin-18 (264 aa).

Residues Met-1–Cys-6 are Cytoplasmic-facing. Residues Gln-7–Met-27 traverse the membrane as a helical segment. The Extracellular segment spans residues Asp-28–Arg-80. The chain crosses the membrane as a helical span at residues Ala-81–Leu-101. At Lys-102 to Gly-122 the chain is on the cytoplasmic side. A helical transmembrane segment spans residues Ile-123–Leu-143. The Extracellular segment spans residues Val-144–Ala-176. The helical transmembrane segment at Ala-177–Ile-197 threads the bilayer. Residues Ala-198–Val-264 lie on the Cytoplasmic side of the membrane. Residues Ala-198–Val-264 form a required for role in regulation of RANKL-induced osteoclast differentiation region. Phosphoserine is present on Ser-217. The tract at residues Lys-241–Val-264 is disordered. The span at Lys-242–Val-264 shows a compositional bias: basic and acidic residues.

Belongs to the claudin family. Interacts with TJP2/ZO-2. Interacts with TJP1/ZO-1. Interacts with YAP1 (phosphorylated); the interaction sequesters YAP1 away from the nucleus and thereby restricts transcription of YAP1 target genes. As to quaternary structure, interacts with CLDN19. As to expression, expressed in the lung (at protein level). Expressed in lung. Expressed in the stomach. In terms of tissue distribution, expressed in lung. As to expression, expressed in stomach. Expressed in bone. Expressed in stomach.

The protein localises to the cell junction. Its subcellular location is the tight junction. It localises to the cell membrane. The protein resides in the lateral cell membrane. Functionally, involved in alveolar fluid homeostasis via regulation of alveolar epithelial tight junction composition and therefore ion transport and solute permeability, potentially via downstream regulation of the actin cytoskeleton organization and beta-2-adrenergic signaling. Required for lung alveolarization and maintenance of the paracellular alveolar epithelial barrier. Acts to maintain epithelial progenitor cell proliferation and organ size, via regulation of YAP1 localization away from the nucleus and thereby restriction of YAP1 target gene transcription. Acts as a negative regulator of RANKL-induced osteoclast differentiation, potentially via relocation of TJP2/ZO-2 away from the nucleus, subsequently involved in bone resorption in response to calcium deficiency. Mediates the osteoprotective effects of estrogen, potentially via acting downstream of estrogen signaling independently of RANKL signaling pathways. Its function is as follows. Involved in the maintenance of homeostasis of the alveolar microenvironment via regulation of pH and subsequent T-cell activation in the alveolar space, is therefore indirectly involved in limiting C.neoformans infection. In terms of biological role, required for the formation of the gastric paracellular barrier via its role in tight junction formation, thereby involved in the response to gastric acidification. This is Claudin-18 (Cldn18) from Mus musculus (Mouse).